The chain runs to 520 residues: Nonsense-mediated mRNA decay factor SMG9 (520 aa).

Disordered stretches follow at residues 1-94 and 107-143; these read MSES…PAPL and GKGP…QRPT. Residue Ser-2 is modified to N-acetylserine. A phosphoserine mark is found at Ser-2, Ser-4, Ser-7, Ser-32, and Ser-53. The segment covering 36-53 has biased composition (basic and acidic residues); sequence GRERDYIAPWERERRDGS. Positions 78–94 are enriched in pro residues; the sequence is QPPPSTAPAAPPAPAPL. The segment covering 112-121 has biased composition (low complexity); that stretch reads AATGASTPEG. Over residues 122-133 the composition is skewed to pro residues; it reads TAPPPPTAPAPP. Ser-451 is modified (phosphoserine).

This sequence belongs to the SMG9 family. As to quaternary structure, self-associates to form homodimers and forms heterodimers with SMG8; these assembly forms may represent SMG1C intermediate forms. Component of the SMG1C complex composed of SMG1, SMG8 and SMG9. Interacts with DHX34; the interaction is RNA-independent. Phosphorylated by SMG1.

Functionally, involved in nonsense-mediated decay (NMD) of mRNAs containing premature stop codons. Is recruited by release factors to stalled ribosomes together with SMG1 and SMG8 (forming the SMG1C protein kinase complex) and, in the SMG1C complex, is required for the efficient association between SMG1 and SMG8. Plays a role in brain, heart, and eye development. This is Nonsense-mediated mRNA decay factor SMG9 from Rattus norvegicus (Rat).